Reading from the N-terminus, the 545-residue chain is CTP synthase (545 aa).

The segment at 1 to 265 (MNGIKHIFIT…DKFVIKHLDL (265 aa)) is amidoligase domain. Serine 15 serves as a coordination point for CTP. Serine 15 is a UTP binding site. Residues 16–21 (SIGKGL) and aspartate 73 contribute to the ATP site. Residues aspartate 73 and glutamate 141 each contribute to the Mg(2+) site. CTP contacts are provided by residues 148–150 (DIE), 188–193 (KTKPTQ), and lysine 224. Residues 188–193 (KTKPTQ) and lysine 224 each bind UTP. Residues 290–534 (EIAIIGKYTG…VAAALARKEI (245 aa)) form the Glutamine amidotransferase type-1 domain. Glycine 349 contacts L-glutamine. The active-site Nucleophile; for glutamine hydrolysis is the cysteine 376. L-glutamine-binding positions include 377 to 380 (LGMQ), glutamate 400, and arginine 460. Active-site residues include histidine 507 and glutamate 509.

The protein belongs to the CTP synthase family. Homotetramer.

It catalyses the reaction UTP + L-glutamine + ATP + H2O = CTP + L-glutamate + ADP + phosphate + 2 H(+). The catalysed reaction is L-glutamine + H2O = L-glutamate + NH4(+). The enzyme catalyses UTP + NH4(+) + ATP = CTP + ADP + phosphate + 2 H(+). Its pathway is pyrimidine metabolism; CTP biosynthesis via de novo pathway; CTP from UDP: step 2/2. With respect to regulation, allosterically activated by GTP, when glutamine is the substrate; GTP has no effect on the reaction when ammonia is the substrate. The allosteric effector GTP functions by stabilizing the protein conformation that binds the tetrahedral intermediate(s) formed during glutamine hydrolysis. Inhibited by the product CTP, via allosteric rather than competitive inhibition. Functionally, catalyzes the ATP-dependent amination of UTP to CTP with either L-glutamine or ammonia as the source of nitrogen. Regulates intracellular CTP levels through interactions with the four ribonucleotide triphosphates. This Tropheryma whipplei (strain TW08/27) (Whipple's bacillus) protein is CTP synthase.